The primary structure comprises 1063 residues: Error-prone DNA polymerase (1063 aa).

Belongs to the DNA polymerase type-C family. DnaE2 subfamily.

It is found in the cytoplasm. It carries out the reaction DNA(n) + a 2'-deoxyribonucleoside 5'-triphosphate = DNA(n+1) + diphosphate. Functionally, DNA polymerase involved in damage-induced mutagenesis and translesion synthesis (TLS). It is not the major replicative DNA polymerase. The polypeptide is Error-prone DNA polymerase (Burkholderia mallei (strain ATCC 23344)).